The chain runs to 134 residues: Phosphomevalonate dehydratase small subunit (134 aa).

The active-site Proton acceptor is the Ser-62.

The protein belongs to the AcnX type II small subunit family. As to quaternary structure, heterodimer composed of a large subunit (PMDh-L) and a small subunit (PMDh-S).

It carries out the reaction (R)-5-phosphomevalonate = (2E)-3-methyl-5-phosphooxypent-2-enoate + H2O. It functions in the pathway isoprenoid biosynthesis; isopentenyl diphosphate biosynthesis via mevalonate pathway. Component of a hydro-lyase that catalyzes the dehydration of mevalonate 5-phosphate (MVA5P) to form trans-anhydromevalonate 5-phosphate (tAHMP). Involved in the archaeal mevalonate (MVA) pathway, which provides fundamental precursors for isoprenoid biosynthesis, such as isopentenyl diphosphate (IPP) and dimethylallyl diphosphate (DMAPP). This Pyrococcus furiosus (strain ATCC 43587 / DSM 3638 / JCM 8422 / Vc1) protein is Phosphomevalonate dehydratase small subunit.